Consider the following 1131-residue polypeptide: Phytochrome (1131 aa).

The segment at 1–30 is disordered; it reads MASNSRHTQSQSTGSNNRRSSTNTNTTTNK. A compositionally biased stretch (low complexity) spans 9 to 29; sequence QSQSTGSNNRRSSTNTNTTTN. Residues 227 to 406 form the GAF domain; sequence DVGLLCDTVV…ALGLQLNMEL (180 aa). Cysteine 332 provides a ligand contact to phytochromobilin. 2 consecutive PAS domains span residues 621–692 and 755–826; these read VASE…LRGE and DYRS…TIVL. One can recognise a Histidine kinase domain in the interval 903-1123; that stretch reads YIRQEIKNPL…LVNVEFPMAQ (221 aa).

It belongs to the phytochrome family. Homodimer. Contains one covalently linked phytochromobilin chromophore.

In terms of biological role, regulatory photoreceptor which exists in two forms that are reversibly interconvertible by light: the Pr form that absorbs maximally in the red region of the spectrum and the Pfr form that absorbs maximally in the far-red region. Photoconversion of Pr to Pfr induces an array of morphogenic responses, whereas reconversion of Pfr to Pr cancels the induction of those responses. Pfr controls the expression of a number of nuclear genes including those encoding the small subunit of ribulose-bisphosphate carboxylase, chlorophyll A/B binding protein, protochlorophyllide reductase, rRNA, etc. It also controls the expression of its own gene(s) in a negative feedback fashion. The sequence is that of Phytochrome from Pinus sylvestris (Scotch pine).